A 628-amino-acid chain; its full sequence is tRNA uridine 5-carboxymethylaminomethyl modification enzyme MnmG (628 aa).

FAD is bound by residues 14–19 (GAGHAG), Val-126, and Ser-181. 273 to 287 (GPRYCPSIEDKVVRF) is an NAD(+) binding site. Position 370 (Gln-370) interacts with FAD.

This sequence belongs to the MnmG family. As to quaternary structure, homodimer. Heterotetramer of two MnmE and two MnmG subunits. FAD is required as a cofactor.

Its subcellular location is the cytoplasm. Its function is as follows. NAD-binding protein involved in the addition of a carboxymethylaminomethyl (cmnm) group at the wobble position (U34) of certain tRNAs, forming tRNA-cmnm(5)s(2)U34. This Pelobacter propionicus (strain DSM 2379 / NBRC 103807 / OttBd1) protein is tRNA uridine 5-carboxymethylaminomethyl modification enzyme MnmG.